The sequence spans 977 residues: ELMO domain-containing protein A (977 aa).

The ELMO domain occupies 383–561; that stretch reads EHDALLMKLW…SVKNLIITAL (179 aa). Composition is skewed to low complexity over residues 792 to 838 and 852 to 897; these read SSNN…NNSG and QQQQ…SSSS. The segment at 792–899 is disordered; that stretch reads SSNNNIKDNL…SSSSSSSSNP (108 aa).

In terms of assembly, associates with mhcA.

Functions as a negative regulator of actin polymerization. Modulates actin/myosin II at cortex actinomyosins to prevent excessive F-actin polymerization around the cell periphery, thereby maintaining proper cell shape during phagocytosis and chemotaxis. This is ELMO domain-containing protein A (elmoA) from Dictyostelium discoideum (Social amoeba).